A 470-amino-acid polypeptide reads, in one-letter code: Putative multidrug resistance protein MdtD (470 aa).

The Periplasmic portion of the chain corresponds to 1 to 11 (MTELPDNTRWQ). Residues 12–32 (LWIVALGFFMQSLDTTIVNTA) form a helical membrane-spanning segment. Residues 33-48 (LPSMAKSLGESPLHMH) lie on the Cytoplasmic side of the membrane. The helical transmembrane segment at 49–69 (MVVVSYVLTVAVMLPASGWLA) threads the bilayer. At 70-76 (DKIGVRN) the chain is on the periplasmic side. The chain crosses the membrane as a helical span at residues 77–97 (IFFAAIVLFTLGSLFCALSGT). The Cytoplasmic portion of the chain corresponds to 98–101 (LNQL). Residues 102–124 (VLARVLQGVGGAMMVPVGRLTVM) traverse the membrane as a helical segment. Over 125-137 (KIVPRAQYMAAMT) the chain is Periplasmic. A helical membrane pass occupies residues 138–158 (FVTLPGQIGPLLGPALGGVLV). Over 159-164 (EYASWH) the chain is Cytoplasmic. The helical transmembrane segment at 165–185 (WIFLINIPVGIVGAMATFMLM) threads the bilayer. The Periplasmic segment spans residues 186–196 (PNYTIETRRFD). A helical transmembrane segment spans residues 197–217 (LPGFLLLAIGMAVLTLALDGS). Over 218-221 (KSMG) the chain is Cytoplasmic. Residues 222 to 242 (ISPWTLAGLAAGGAAAILLYL) traverse the membrane as a helical segment. The Periplasmic portion of the chain corresponds to 243 to 262 (LHAKKNSGALFSLRLFRTPT). The chain crosses the membrane as a helical span at residues 263 to 283 (FSLGLLGSFAGRIGSGMLPFM). Over 284–285 (TP) the chain is Cytoplasmic. A helical membrane pass occupies residues 286 to 306 (VFLQIGLGFSPFHAGLMMIPM). Over 307–341 (VLGSMGMKRIVVQIVNRFGYRRVLVATTLGLALVS) the chain is Periplasmic. The chain crosses the membrane as a helical span at residues 342–362 (LLFMSVALLGWYYLLPLVLLL). Over 363-395 (QGMVNSARFSSMNTLTLKDLPDTLASSGNSLLS) the chain is Cytoplasmic. A helical transmembrane segment spans residues 396-416 (MIMQLSMSIGVTIAGMLLGMF). Residues 417 to 430 (GQQHIGIDSSATHH) are Periplasmic-facing. Residues 431-451 (VFMYTWLCMAVIIALPAIIFA) form a helical membrane-spanning segment. Residues 452–470 (RVPNDTQQNMVISRRKRSL) lie on the Cytoplasmic side of the membrane.

The protein belongs to the major facilitator superfamily. TCR/Tet family.

The protein localises to the cell inner membrane. This Salmonella heidelberg (strain SL476) protein is Putative multidrug resistance protein MdtD.